Reading from the N-terminus, the 99-residue chain is Small ribosomal subunit protein uS14m (99 aa).

The protein belongs to the universal ribosomal protein uS14 family.

The protein localises to the mitochondrion. This is Small ribosomal subunit protein uS14m (RPS14) from Oenothera berteroana (Bertero's evening primrose).